Consider the following 308-residue polypeptide: Coenzyme PQQ synthesis protein B (308 aa).

It belongs to the PqqB family.

It functions in the pathway cofactor biosynthesis; pyrroloquinoline quinone biosynthesis. May be involved in the transport of PQQ or its precursor to the periplasm. This chain is Coenzyme PQQ synthesis protein B, found in Klebsiella pneumoniae subsp. pneumoniae (strain ATCC 700721 / MGH 78578).